Consider the following 651-residue polypeptide: Bromodomain-containing protein 7 (651 aa).

A Glycyl lysine isopeptide (Lys-Gly) (interchain with G-Cter in SUMO2) cross-link involves residue Lys-21. The segment at 34-103 (VTELSTGSSG…RDRAENEVDR (70 aa)) is disordered. Polar residues predominate over residues 35 to 45 (TELSTGSSGHD). Over residues 47–57 (SLFEDRSDHDK) the composition is skewed to basic and acidic residues. The span at 58-69 (HKDRKRKKRKKG) shows a compositional bias: basic residues. The Nuclear localization signal signature appears at 65–96 (KRKKGEKQAPGEEKGRKRRRVKEDKKKRDRDR). Over residues 70-103 (EKQAPGEEKGRKRRRVKEDKKKRDRDRAENEVDR) the composition is skewed to basic and acidic residues. Glycyl lysine isopeptide (Lys-Gly) (interchain with G-Cter in SUMO2) cross-links involve residues Lys-127, Lys-186, Lys-197, Lys-201, Lys-212, and Lys-241. The Bromo domain occupies 131–235 (VEQTPLQEAL…HSGMKILSQE (105 aa)). Residues 252–316 (KTRKQKERTD…RSSNSEREHE (65 aa)) form a disordered region. Ser-279 and Ser-289 each carry phosphoserine. A compositionally biased stretch (basic and acidic residues) spans 290-316 (PAKDNKRKDKDVLEDKWRSSNSEREHE). Lys-305 participates in a covalent cross-link: Glycyl lysine isopeptide (Lys-Gly) (interchain with G-Cter in SUMO2). Lys-328 is modified (N6-acetyllysine). Residue Lys-344 forms a Glycyl lysine isopeptide (Lys-Gly) (interchain with G-Cter in SUMO2) linkage. At Ser-380 the chain carries Phosphoserine. Lys-389 participates in a covalent cross-link: Glycyl lysine isopeptide (Lys-Gly) (interchain with G-Cter in SUMO2). A phosphoserine mark is found at Ser-475, Ser-482, and Ser-483. The stretch at 536 to 567 (SEEAEVFQRKLDETTRLLRELQEAQNERLSTR) forms a coiled coil. Ser-621 carries the phosphoserine modification.

As to quaternary structure, interacts with IRF2 and HNRPUL1. Interacts (via N-terminus) with TP53. Interacts (via C-terminus) with EP300. Interacts with BRCA1. Interacts (via bromo domain) with histone H3 (via N-terminus) acetylated at 'Lys-14' (H3K14ac). Has low affinity for histone H3 acetylated at 'Lys-9' (H3K9ac). Has the highest affinity for histone H3 that is acetylated both at 'Lys-9' (H3K9ac) and at 'Lys-14' (H3K14ac). Has very low affinity for non-acetylated histone H3. Interacts (via bromo domain) with histone H4 (via N-terminus) acetylated at 'Lys-8' (H3K8ac) (in vitro). Interacts with TRIM24, PTPN13 and DVL1. Identified in a complex with SMARCA4/BRG1, SMARCC1/BAF155, SMARCE1/BAF57, DPF2/BAF45D and ARID2, subunits of the SWI/SNF-B (PBAF) chromatin remodeling complex. Ubiquitous.

The protein resides in the nucleus. The protein localises to the chromosome. Functionally, acts both as coactivator and as corepressor. May play a role in chromatin remodeling. Transcriptional corepressor that down-regulates the expression of target genes. Binds to target promoters, leading to increased histone H3 acetylation at 'Lys-9' (H3K9ac). Binds to the ESR1 promoter. Recruits BRCA1 and POU2F1 to the ESR1 promoter. Coactivator for TP53-mediated activation of transcription of a set of target genes. Required for TP53-mediated cell-cycle arrest in response to oncogene activation. Promotes acetylation of TP53 at 'Lys-382', and thereby promotes efficient recruitment of TP53 to target promoters. Inhibits cell cycle progression from G1 to S phase. Activator of the Wnt signaling pathway in a DVL1-dependent manner by negatively regulating the GSK3B phosphotransferase activity. Induces dephosphorylation of GSK3B at 'Tyr-216'. Down-regulates TRIM24-mediated activation of transcriptional activation by AR. The protein is Bromodomain-containing protein 7 (Brd7) of Mus musculus (Mouse).